The sequence spans 566 residues: Mediator of RNA polymerase II transcription subunit 1 (566 aa).

Position 155 is a phosphoserine (S155). The segment at 361 to 425 is disordered; it reads TPSSNSNSSE…TNKSKRPSIT (65 aa). Residues 410-421 show a composition bias toward basic residues; sequence RRRRSSTNKSKR. Position 423 is a phosphoserine (S423).

This sequence belongs to the Mediator complex subunit 1 family. In terms of assembly, component of the Mediator complex, which is composed of at least 21 subunits that form three structurally distinct submodules. The Mediator head module contains MED6, MED8, MED11, SRB4/MED17, SRB5/MED18, ROX3/MED19, SRB2/MED20 and SRB6/MED22, the middle module contains MED1, MED4, NUT1/MED5, MED7, CSE2/MED9, NUT2/MED10, SRB7/MED21 and SOH1/MED31, and the tail module contains MED2, PGD1/MED3, RGR1/MED14, GAL11/MED15 and SIN4/MED16. The head and the middle modules interact directly with RNA polymerase II, whereas the elongated tail module interacts with gene-specific regulatory proteins. MED1 interacts directly with MED4 and MED7.

Its subcellular location is the nucleus. Functionally, component of the Mediator complex, a coactivator involved in the regulated transcription of nearly all RNA polymerase II-dependent genes. Mediator functions as a bridge to convey information from gene-specific regulatory proteins to the basal RNA polymerase II transcription machinery. The Mediator complex, having a compact conformation in its free form, is recruited to promoters by direct interactions with regulatory proteins and serves for the assembly of a functional preinitiation complex with RNA polymerase II and the general transcription factors. The Mediator complex unfolds to an extended conformation and partially surrounds RNA polymerase II, specifically interacting with the unphosphorylated form of the C-terminal domain (CTD) of RNA polymerase II. The Mediator complex dissociates from the RNA polymerase II holoenzyme and stays at the promoter when transcriptional elongation begins. In Saccharomyces cerevisiae (strain ATCC 204508 / S288c) (Baker's yeast), this protein is Mediator of RNA polymerase II transcription subunit 1 (MED1).